Here is a 304-residue protein sequence, read N- to C-terminus: Protoheme IX farnesyltransferase 2 (304 aa).

9 helical membrane passes run 28–48 (VVAL…VVDF), 50–70 (WLQA…AAAF), 98–118 (ISVA…LYAL), 122–142 (LTAW…TMYL), 150–170 (IVIA…AVTG), 176–196 (AWLL…AIAI), 223–243 (ILLY…VGMV), 245–265 (SVYL…AWKL), and 282–302 (IYHL…GLFF).

Belongs to the UbiA prenyltransferase family. Protoheme IX farnesyltransferase subfamily.

The protein localises to the cell inner membrane. The catalysed reaction is heme b + (2E,6E)-farnesyl diphosphate + H2O = Fe(II)-heme o + diphosphate. It functions in the pathway porphyrin-containing compound metabolism; heme O biosynthesis; heme O from protoheme: step 1/1. Converts heme B (protoheme IX) to heme O by substitution of the vinyl group on carbon 2 of heme B porphyrin ring with a hydroxyethyl farnesyl side group. This chain is Protoheme IX farnesyltransferase 2, found in Vibrio campbellii (strain ATCC BAA-1116).